We begin with the raw amino-acid sequence, 110 residues long: Insulin (110 aa).

An N-terminal signal peptide occupies residues 1–24 (MALWMRLLPLLALLALWGPDPVPA). Disulfide bonds link cysteine 31–cysteine 96, cysteine 43–cysteine 109, and cysteine 95–cysteine 100. A propeptide spans 57 to 87 (EAEDPQVGQVELGGGPGAGSLQPLALEGSLQ) (c peptide).

This sequence belongs to the insulin family. In terms of assembly, heterodimer of a B chain and an A chain linked by two disulfide bonds.

It is found in the secreted. Functionally, insulin decreases blood glucose concentration. It increases cell permeability to monosaccharides, amino acids and fatty acids. It accelerates glycolysis, the pentose phosphate cycle, and glycogen synthesis in liver. The sequence is that of Insulin (INS) from Chlorocebus aethiops (Green monkey).